The following is a 671-amino-acid chain: Vinexin (671 aa).

An N-acetylalanine modification is found at Gln2. At Arg6 the chain carries Phosphoserine. Disordered regions lie at residues 46-111, 166-215, 249-268, 295-324, and 337-383; these read LNFQ…TKDS, TFEE…RPGA, LETG…EKPS, TRLP…AWSS, and SLSP…KKRK. The span at 88–108 shows a compositional bias: polar residues; that stretch reads PSASTKIPASQHTQNWSATWT. Positions 115 to 187 constitute a SoHo domain; sequence DKRWVKYEGI…GAQQRPAHRP (73 aa). Position 348 is a phosphoserine (Ser348). Residues 359-368 show a composition bias toward polar residues; that stretch reads PSSTRDPSAS. SH3 domains lie at 380-439 and 454-515; these read KKRK…VLPA and LEYG…VSRE. The segment at 380–515 is binds to vinculin; it reads KKRKAARLKF…PASYVQVSRE (136 aa). Ser395 is modified (phosphoserine). The tract at residues 519 to 611 is disordered; it reads RLCDDGPQLP…LGTSSPNTSQ (93 aa). Ser530 carries the post-translational modification Phosphoserine; by MAPK1. Low complexity predominate over residues 535-553; that stretch reads AAARSARHPSSPSALRSPA. 5 positions are modified to phosphoserine: Ser544, Ser545, Ser547, Ser551, and Ser563. Positions 560–584 are enriched in polar residues; that stretch reads GQTSPRRTGFSFPTQEPRPQTQNLG. The 60-residue stretch at 612 to 671 folds into the SH3 3 domain; it reads IHWTPYRAMYQYRPQNEDELELREGDRVDVMQQCDDGWFVGVSRRTQKFGTFPGNYVAPV. The interval 612–671 is binds to SOS; sequence IHWTPYRAMYQYRPQNEDELELREGDRVDVMQQCDDGWFVGVSRRTQKFGTFPGNYVAPV.

In terms of assembly, interacts with DLG5 through its third SH3 domain. Interacts with vinculin by the first two SH3 domains and the proline rich region of vinculin. Binds to SOS (guanine nucleotide exchange factor of RAS and RAC), through its third SH3 domain. The formation of this complex is down-regulated by phosphorylation of SOS. Interacts with INPPL1/SHIP2, SAFB2, SOCS7 and SRCIN1. Interacts with FASLG. Interacts with MAPK1/ERK2. In terms of processing, phosphorylated at Ser-530 by MAPK1/ERK2 during cell spreading. In terms of tissue distribution, both isoforms are expressed in different tissues like heart, placenta, brain, skeletal muscle and pancreas. Isoform beta is especially found in liver.

Its subcellular location is the cell junction. The protein localises to the cytoplasm. It is found in the cytoskeleton. The protein resides in the nucleus. Its function is as follows. Vinexin alpha isoform promotes up-regulation of actin stress fiber formation. Vinexin beta isoform plays a role in cell spreading and enhances the activation of JNK/SAPK in response to EGF stimulation by using its third SH3 domain. The sequence is that of Vinexin (SORBS3) from Homo sapiens (Human).